The chain runs to 54 residues: MPQLNPIPWVFLFFLVWLVLGFLGLQKFTSVVTTTLDDSSEEVEVKSKEYSWPW.

Residues 9–25 form a helical membrane-spanning segment; sequence WVFLFFLVWLVLGFLGL.

It belongs to the ATPase protein 8 family. Component of the ATP synthase complex composed at least of ATP5F1A/subunit alpha, ATP5F1B/subunit beta, ATP5MC1/subunit c (homooctomer), MT-ATP6/subunit a, MT-ATP8/subunit 8, ATP5ME/subunit e, ATP5MF/subunit f, ATP5MG/subunit g, ATP5MK/subunit k, ATP5MJ/subunit j, ATP5F1C/subunit gamma, ATP5F1D/subunit delta, ATP5F1E/subunit epsilon, ATP5PF/subunit F6, ATP5PB/subunit b, ATP5PD/subunit d, ATP5PO/subunit OSCP. ATP synthase complex consists of a soluble F(1) head domain (subunits alpha(3) and beta(3)) - the catalytic core - and a membrane F(0) domain - the membrane proton channel (subunits c, a, 8, e, f, g, k and j). These two domains are linked by a central stalk (subunits gamma, delta, and epsilon) rotating inside the F1 region and a stationary peripheral stalk (subunits F6, b, d, and OSCP).

Its subcellular location is the mitochondrion membrane. Functionally, subunit 8, of the mitochondrial membrane ATP synthase complex (F(1)F(0) ATP synthase or Complex V) that produces ATP from ADP in the presence of a proton gradient across the membrane which is generated by electron transport complexes of the respiratory chain. ATP synthase complex consist of a soluble F(1) head domain - the catalytic core - and a membrane F(1) domain - the membrane proton channel. These two domains are linked by a central stalk rotating inside the F(1) region and a stationary peripheral stalk. During catalysis, ATP synthesis in the catalytic domain of F(1) is coupled via a rotary mechanism of the central stalk subunits to proton translocation. In vivo, can only synthesize ATP although its ATP hydrolase activity can be activated artificially in vitro. Part of the complex F(0) domain. The polypeptide is ATP synthase F(0) complex subunit 8 (Branchiostoma lanceolatum (Common lancelet)).